The sequence spans 470 residues: Hydroxymethylglutaryl-CoA synthase (470 aa).

Glu-100 functions as the Proton donor/acceptor in the catalytic mechanism. Catalysis depends on Cys-134, which acts as the Acyl-thioester intermediate. (3S)-3-hydroxy-3-methylglutaryl-CoA contacts are provided by Cys-134, Thr-176, Ser-225, His-269, Lys-278, Asn-348, and Ser-382. Residue His-269 is the Proton donor/acceptor of the active site.

Belongs to the thiolase-like superfamily. HMG-CoA synthase family.

The enzyme catalyses acetoacetyl-CoA + acetyl-CoA + H2O = (3S)-3-hydroxy-3-methylglutaryl-CoA + CoA + H(+). It functions in the pathway metabolic intermediate biosynthesis; (R)-mevalonate biosynthesis; (R)-mevalonate from acetyl-CoA: step 2/3. Hydroxymethylglutaryl-CoA synthase; part of the first module of ergosterol biosynthesis pathway that includes the early steps of the pathway, conserved across all eukaryotes, and which results in the formation of mevalonate from acetyl-coenzyme A (acetyl-CoA). This module also plays a key role in the biosynthesis of triterpenes such as ganoderic acids (GA), a group of highly oxygenated lanostane-type triterpenoids which are well recognized as a main group of unique bioactive compounds in the medicinal mushroom Ganoderma lucidum. In this module, the acetyl-CoA acetyltransferase catalyzes the formation of acetoacetyl-CoA. The hydroxymethylglutaryl-CoA synthase HMGS then condenses acetyl-CoA with acetoacetyl-CoA to form HMG-CoA. The rate-limiting step of the early module is the reduction to mevalonate by the 3-hydroxy-3-methylglutaryl-coenzyme A (HMG-CoA) reductase. This is Hydroxymethylglutaryl-CoA synthase from Ganoderma lucidum (Ling zhi medicinal fungus).